A 190-amino-acid polypeptide reads, in one-letter code: Large ribosomal subunit protein bL9 (190 aa).

This sequence belongs to the bacterial ribosomal protein bL9 family.

Functionally, binds to the 23S rRNA. In Rhodobacter capsulatus (strain ATCC BAA-309 / NBRC 16581 / SB1003), this protein is Large ribosomal subunit protein bL9.